A 271-amino-acid polypeptide reads, in one-letter code: Insulin-like growth factor-binding protein 5 (271 aa).

The signal sequence occupies residues M1 to G19. The region spanning S22–E102 is the IGFBP N-terminal domain. Cystine bridges form between C26/C52, C29/C54, C37/C55, C44/C58, C66/C79, and C73/C99. Over residues A109–P121 the composition is skewed to basic and acidic residues. The disordered stretch occupies residues A109–E129. The residue at position 115 (S115) is a Phosphoserine. One can recognise a Thyroglobulin type-1 domain in the interval Q188–C262. 3 disulfide bridges follow: C191-C218, C229-C240, and C242-C262.

In terms of assembly, interacts with IGF1; this interaction enhances the growth stimulatory effects of IGF1 on fibroblasts. Interacts with CAV1; this interaction allows trafficking of IGFBP5 from the plasma membrane to the nucleus. Interacts with NCL; this interaction is necessary for IGFBP5 localization to the nucleus.

The protein resides in the secreted. It is found in the cytoplasm. It localises to the nucleus. Its function is as follows. Multifunctional protein that plays a critical role in regulating the availability of IGFs to their receptors and thereby regulates IGF-mediated cellular processes including proliferation, differentiation, and apoptosis in a cell-type specific manner. Increases the cell proliferation of osteoblasts, intestinal smooth muscle cells and neuroblastoma cells. Enhances adhesion and survival of epithelial cells but decreases adhesion of mesenchymal cells. Once secreted, acts as a major mediator of mTORC1-dependent feedback inhibition of IGF1 signaling. Also plays a role in the induction of extracellular matrix (ECM) production and deposition independently of its nuclear translocation and binding to IGFs. Acts itself as a growth factor that can act independently of IGFs to regulate bone formation. Acts as a ligand for the ROR1 receptor which triggers formation of ROR1/HER2 heterodimer to enhance CREB oncogenic signaling. This chain is Insulin-like growth factor-binding protein 5 (IGFBP5), found in Sus scrofa (Pig).